The chain runs to 376 residues: Cytochrome-c peroxidase IdrP1 (376 aa).

A signal peptide spans 1 to 24; that stretch reads MGHIRSIRLALAVAAVCTAASAAA. 2 consecutive Cytochrome c domains span residues 49–157 and 203–354; these read DKVA…AAFK and AEAQ…EALS. 6 residues coordinate heme c: Cys71, Cys74, His75, Cys218, Cys221, and His222.

The iodate reductase (Idr) complex is composed of a molybdopterin-dependent iodate reductase (IdrA and IdrB subunits) and two associated peroxidases (IdrP1 and IdrP2). Heme c serves as cofactor.

The protein localises to the periplasm. The enzyme catalyses 2 Fe(II)-[cytochrome c] + H2O2 + 2 H(+) = 2 Fe(III)-[cytochrome c] + 2 H2O. In terms of biological role, involved in iodate respiration. May play a critical role in detoxification of inadvertent H(2)O(2) generated by the iodate reductase IdrA/IdrB. The sequence is that of Cytochrome-c peroxidase IdrP1 from Denitromonas iodatirespirans.